Reading from the N-terminus, the 207-residue chain is Large ribosomal subunit protein uL4 (207 aa).

The tract at residues 48–75 (THAVKNRSAVSGGGRKPWKQKGTGRARA) is disordered.

The protein belongs to the universal ribosomal protein uL4 family. As to quaternary structure, part of the 50S ribosomal subunit.

One of the primary rRNA binding proteins, this protein initially binds near the 5'-end of the 23S rRNA. It is important during the early stages of 50S assembly. It makes multiple contacts with different domains of the 23S rRNA in the assembled 50S subunit and ribosome. In terms of biological role, forms part of the polypeptide exit tunnel. The chain is Large ribosomal subunit protein uL4 from Leuconostoc citreum (strain KM20).